Consider the following 159-residue polypeptide: Transcriptional repressor NrdR (159 aa).

The segment at Cys3–Cys34 is a zinc-finger region. The ATP-cone domain occupies Pro49–Asp139.

This sequence belongs to the NrdR family. It depends on Zn(2+) as a cofactor.

Negatively regulates transcription of bacterial ribonucleotide reductase nrd genes and operons by binding to NrdR-boxes. In Syntrophus aciditrophicus (strain SB), this protein is Transcriptional repressor NrdR.